The chain runs to 303 residues: N-acetyl-D-glucosamine kinase (303 aa).

ATP is bound by residues 4–11 (GFDIGGTK) and 133–140 (GVGGGLVL). Zn(2+) is bound by residues His157, Cys177, Cys179, and Cys184.

The protein belongs to the ROK (NagC/XylR) family. NagK subfamily.

It carries out the reaction N-acetyl-D-glucosamine + ATP = N-acetyl-D-glucosamine 6-phosphate + ADP + H(+). The protein operates within cell wall biogenesis; peptidoglycan recycling. In terms of biological role, catalyzes the phosphorylation of N-acetyl-D-glucosamine (GlcNAc) derived from cell-wall degradation, yielding GlcNAc-6-P. In Citrobacter koseri (strain ATCC BAA-895 / CDC 4225-83 / SGSC4696), this protein is N-acetyl-D-glucosamine kinase.